The primary structure comprises 657 residues: 1-deoxy-D-xylulose-5-phosphate synthase (657 aa).

His73 provides a ligand contact to thiamine diphosphate. The segment at 91–110 is disordered; it reads RQEGGMSGYPDRGESEHDIV. A compositionally biased stretch (basic and acidic residues) spans 101-110; that stretch reads DRGESEHDIV. A thiamine diphosphate-binding site is contributed by 113 to 115; that stretch reads SHA. Asp145 is a Mg(2+) binding site. Residues 146–147, Asn175, Tyr293, and Glu375 contribute to the thiamine diphosphate site; that span reads GA. Position 175 (Asn175) interacts with Mg(2+).

The protein belongs to the transketolase family. DXPS subfamily. In terms of assembly, homodimer. Mg(2+) is required as a cofactor. Thiamine diphosphate serves as cofactor.

It carries out the reaction D-glyceraldehyde 3-phosphate + pyruvate + H(+) = 1-deoxy-D-xylulose 5-phosphate + CO2. The protein operates within metabolic intermediate biosynthesis; 1-deoxy-D-xylulose 5-phosphate biosynthesis; 1-deoxy-D-xylulose 5-phosphate from D-glyceraldehyde 3-phosphate and pyruvate: step 1/1. Catalyzes the acyloin condensation reaction between C atoms 2 and 3 of pyruvate and glyceraldehyde 3-phosphate to yield 1-deoxy-D-xylulose-5-phosphate (DXP). In Arthrobacter sp. (strain FB24), this protein is 1-deoxy-D-xylulose-5-phosphate synthase.